A 271-amino-acid chain; its full sequence is MVRPRRVFAQHWLKSEKALDAIVKAAECSTNDRILEIGPGTGILTRRLLPLVEALLAVEIDRDLCKLLVKQLGQKENFLLLQGDFLTLDLVANLLTFPKFQKPNKVVANIPYNITGPIIEKLLGTIANPNPEPFDSIVLLIQKEVAERLYAKAGSRTFGALSVRVQYLADCEFICDVPAGAFHPPPKVDSAVVRLRPRQIQIPARDPKRLENLVKLGFGAKRKMLRNNLQSVVDRDRLSQLLEQLNINPQARAEDISTQQWVELANLLGVE.

H11, L13, G38, E59, D84, and N109 together coordinate S-adenosyl-L-methionine.

It belongs to the class I-like SAM-binding methyltransferase superfamily. rRNA adenine N(6)-methyltransferase family. RsmA subfamily.

The protein localises to the cytoplasm. It catalyses the reaction adenosine(1518)/adenosine(1519) in 16S rRNA + 4 S-adenosyl-L-methionine = N(6)-dimethyladenosine(1518)/N(6)-dimethyladenosine(1519) in 16S rRNA + 4 S-adenosyl-L-homocysteine + 4 H(+). Specifically dimethylates two adjacent adenosines (A1518 and A1519) in the loop of a conserved hairpin near the 3'-end of 16S rRNA in the 30S particle. May play a critical role in biogenesis of 30S subunits. The sequence is that of Ribosomal RNA small subunit methyltransferase A from Trichormus variabilis (strain ATCC 29413 / PCC 7937) (Anabaena variabilis).